A 213-amino-acid polypeptide reads, in one-letter code: Uracil phosphoribosyltransferase (213 aa).

5-phospho-alpha-D-ribose 1-diphosphate-binding positions include arginine 78, arginine 103, and 131 to 139 (DPMLATGGT). Uracil contacts are provided by residues isoleucine 197 and 202 to 204 (GDA). Aspartate 203 serves as a coordination point for 5-phospho-alpha-D-ribose 1-diphosphate.

The protein belongs to the UPRTase family. It depends on Mg(2+) as a cofactor.

The enzyme catalyses UMP + diphosphate = 5-phospho-alpha-D-ribose 1-diphosphate + uracil. The protein operates within pyrimidine metabolism; UMP biosynthesis via salvage pathway; UMP from uracil: step 1/1. Allosterically activated by GTP. In terms of biological role, catalyzes the conversion of uracil and 5-phospho-alpha-D-ribose 1-diphosphate (PRPP) to UMP and diphosphate. This chain is Uracil phosphoribosyltransferase, found in Bifidobacterium longum (strain DJO10A).